The chain runs to 522 residues: 56 kDa type-specific antigen (522 aa).

Residues Met1–Ala22 form the signal peptide. The helical transmembrane segment at Leu67–Phe87 threads the bilayer. Positions Ala385–Gly417 are disordered. Residues Asn398–Gly417 are compositionally biased toward basic and acidic residues. Residues Ile470 to Val490 traverse the membrane as a helical segment.

It is found in the cell membrane. In terms of biological role, may be an adherent factor for rickettsial adsorption to the host-cell surface and a determinant of virulence of individual rickettsial strain. It is the major outer membrane protein. The polypeptide is 56 kDa type-specific antigen (Orientia tsutsugamushi (Rickettsia tsutsugamushi)).